The sequence spans 247 residues: Cell division protein ZapD (247 aa).

This sequence belongs to the ZapD family. As to quaternary structure, interacts with FtsZ.

The protein localises to the cytoplasm. Its function is as follows. Cell division factor that enhances FtsZ-ring assembly. Directly interacts with FtsZ and promotes bundling of FtsZ protofilaments, with a reduction in FtsZ GTPase activity. The protein is Cell division protein ZapD of Klebsiella pneumoniae (strain 342).